The sequence spans 409 residues: Argininosuccinate synthase (409 aa).

Residues 11 to 19 (AYSGGLDTS) and Ala-38 contribute to the ATP site. Residues Tyr-91 and Ser-96 each coordinate L-citrulline. Residue Gly-121 coordinates ATP. Residues Thr-123, Asn-127, and Asp-128 each coordinate L-aspartate. An L-citrulline-binding site is contributed by Asn-127. L-citrulline is bound by residues Arg-131, Ser-182, Ser-191, Glu-267, and Tyr-279.

It belongs to the argininosuccinate synthase family. Type 1 subfamily. Homotetramer.

The protein localises to the cytoplasm. The enzyme catalyses L-citrulline + L-aspartate + ATP = 2-(N(omega)-L-arginino)succinate + AMP + diphosphate + H(+). It participates in amino-acid biosynthesis; L-arginine biosynthesis; L-arginine from L-ornithine and carbamoyl phosphate: step 2/3. The polypeptide is Argininosuccinate synthase (Nitrobacter hamburgensis (strain DSM 10229 / NCIMB 13809 / X14)).